A 409-amino-acid polypeptide reads, in one-letter code: Astacin-like metalloendopeptidase (409 aa).

An N-terminal signal peptide occupies residues 1–19; it reads MDLKMLLIFTAFLLPAVLG. Residues 20–86 constitute a propeptide that is removed on maturation; it reads FPIQDNYENS…EGDIVPRRSR (67 aa). Residues 30–42 show a composition bias toward low complexity; sequence TATSESTQVTTEE. The tract at residues 30-55 is disordered; it reads TATSESTQVTTEESIYDSPSPTETDS. One can recognise a Peptidase M12A domain in the interval 87–285; that stretch reads SAFNCRNCYW…AKINKLYNCS (199 aa). Intrachain disulfides connect Cys91/Cys94, Cys134/Cys284, Cys155/Cys175, Cys287/Cys313, and Cys339/Cys362. His183 provides a ligand contact to Zn(2+). Glu184 is an active-site residue. Zn(2+) is bound by residues His187 and His193. One can recognise a CUB domain in the interval 287 to 399; the sequence is CSTIIDAAFG…SGFQATFTSA (113 aa).

Zn(2+) serves as cofactor.

It localises to the cytoplasm. Its subcellular location is the cell membrane. The protein localises to the cytoplasmic vesicle. The protein resides in the secretory vesicle. It is found in the cortical granule. In terms of biological role, probable oocyte-specific oolemmal receptor involved in sperm and egg adhesion and fertilization. Protease which may play a role in the breaking down of the vitelline membrane (days 0-5) and possibly, in the digestion of the egg white (days 9-12). This is Astacin-like metalloendopeptidase from Coturnix japonica (Japanese quail).